A 277-amino-acid polypeptide reads, in one-letter code: NH(3)-dependent NAD(+) synthetase (277 aa).

36–43 (GLSGGIDS) is a binding site for ATP. Aspartate 42 serves as a coordination point for Mg(2+). Residue arginine 118 participates in deamido-NAD(+) binding. Threonine 138 lines the ATP pocket. Glutamate 143 is a binding site for Mg(2+). ATP is bound by residues lysine 167 and serine 189.

The protein belongs to the NAD synthetase family. As to quaternary structure, homodimer.

It carries out the reaction deamido-NAD(+) + NH4(+) + ATP = AMP + diphosphate + NAD(+) + H(+). The protein operates within cofactor biosynthesis; NAD(+) biosynthesis; NAD(+) from deamido-NAD(+) (ammonia route): step 1/1. Functionally, catalyzes the ATP-dependent amidation of deamido-NAD to form NAD. Uses ammonia as a nitrogen source. This Chlorobaculum tepidum (strain ATCC 49652 / DSM 12025 / NBRC 103806 / TLS) (Chlorobium tepidum) protein is NH(3)-dependent NAD(+) synthetase.